The primary structure comprises 234 residues: Large ribosomal subunit protein uL1 (234 aa).

The protein belongs to the universal ribosomal protein uL1 family. In terms of assembly, part of the 50S ribosomal subunit.

Its function is as follows. Binds directly to 23S rRNA. The L1 stalk is quite mobile in the ribosome, and is involved in E site tRNA release. In terms of biological role, protein L1 is also a translational repressor protein, it controls the translation of the L11 operon by binding to its mRNA. The protein is Large ribosomal subunit protein uL1 of Psychromonas ingrahamii (strain DSM 17664 / CCUG 51855 / 37).